The chain runs to 115 residues: Ribosome-binding factor A (115 aa).

The protein belongs to the RbfA family. In terms of assembly, monomer. Binds 30S ribosomal subunits, but not 50S ribosomal subunits or 70S ribosomes.

It is found in the cytoplasm. Functionally, one of several proteins that assist in the late maturation steps of the functional core of the 30S ribosomal subunit. Associates with free 30S ribosomal subunits (but not with 30S subunits that are part of 70S ribosomes or polysomes). Required for efficient processing of 16S rRNA. May interact with the 5'-terminal helix region of 16S rRNA. This Bacillus velezensis (strain DSM 23117 / BGSC 10A6 / LMG 26770 / FZB42) (Bacillus amyloliquefaciens subsp. plantarum) protein is Ribosome-binding factor A.